The primary structure comprises 305 residues: Cysteine synthase (305 aa).

Position 45 is an N6-(pyridoxal phosphate)lysine (lysine 45). Pyridoxal 5'-phosphate is bound by residues asparagine 75, 179 to 183 (GSGGT), and serine 266.

Belongs to the cysteine synthase/cystathionine beta-synthase family. Homodimer. Pyridoxal 5'-phosphate serves as cofactor.

The catalysed reaction is O-acetyl-L-serine + hydrogen sulfide = L-cysteine + acetate. It functions in the pathway amino-acid biosynthesis; L-cysteine biosynthesis; L-cysteine from L-serine: step 2/2. The protein is Cysteine synthase (cysM) of Helicobacter pylori (strain J99 / ATCC 700824) (Campylobacter pylori J99).